Consider the following 341-residue polypeptide: tRNA N6-adenosine threonylcarbamoyltransferase (341 aa).

Fe cation contacts are provided by His111 and His115. Substrate-binding positions include 134-138, Asp167, Gly180, and Asn272; that span reads LVSGG. Fe cation is bound at residue Asp300.

It belongs to the KAE1 / TsaD family. Fe(2+) serves as cofactor.

The protein localises to the cytoplasm. It carries out the reaction L-threonylcarbamoyladenylate + adenosine(37) in tRNA = N(6)-L-threonylcarbamoyladenosine(37) in tRNA + AMP + H(+). Functionally, required for the formation of a threonylcarbamoyl group on adenosine at position 37 (t(6)A37) in tRNAs that read codons beginning with adenine. Is involved in the transfer of the threonylcarbamoyl moiety of threonylcarbamoyl-AMP (TC-AMP) to the N6 group of A37, together with TsaE and TsaB. TsaD likely plays a direct catalytic role in this reaction. In Blochmanniella pennsylvanica (strain BPEN), this protein is tRNA N6-adenosine threonylcarbamoyltransferase.